Reading from the N-terminus, the 340-residue chain is Protein arginine N-methyltransferase 6 (340 aa).

The SAM-dependent MTase PRMT-type domain maps to 15–339; the sequence is DQEYFQCYSD…LRRTKHFHMG (325 aa). S-adenosyl-L-methionine is bound by residues His28, Arg37, Gly61, Glu83, and Glu112. Active-site residues include Glu126 and Glu135.

Belongs to the class I-like SAM-binding methyltransferase superfamily. Protein arginine N-methyltransferase family. PRMT6 subfamily.

The protein localises to the nucleus. The enzyme catalyses L-arginyl-[protein] + 2 S-adenosyl-L-methionine = N(omega),N(omega)-dimethyl-L-arginyl-[protein] + 2 S-adenosyl-L-homocysteine + 2 H(+). Its function is as follows. Arginine methyltransferase that can catalyze the formation of both omega-N monomethylarginine (MMA) and asymmetrical dimethylarginine (aDMA), with a strong preference for the formation of aDMA. Preferentially methylates arginyl residues present in a glycine and arginine-rich domain and displays preference for monomethylated substrates. Specifically mediates the asymmetric dimethylation of histone H3 'Arg-2' to form H3R2me2a. H3R2me2a represents a specific tag for epigenetic transcriptional repression and is mutually exclusive with methylation on histone H3 'Lys-4' (H3K4me2 and H3K4me3). Acts as a transcriptional repressor of various genes such as HOXA2, THBS1 and TP53. Repression of TP53 blocks cellular senescence. Also methylates histone H2A and H4 'Arg-3' (H2AR3me and H4R3me, respectively). Acts as a regulator of DNA base excision during DNA repair by mediating the methylation of DNA polymerase beta (POLB), leading to the stimulation of its polymerase activity by enhancing DNA binding and processivity. Methylates HMGA1. Regulates alternative splicing events. Acts as a transcriptional coactivator of a number of steroid hormone receptors including ESR1, ESR2, PGR and NR3C1. This chain is Protein arginine N-methyltransferase 6 (prmt6), found in Xenopus laevis (African clawed frog).